A 144-amino-acid polypeptide reads, in one-letter code: Maximins 4/H3 type 3 (144 aa).

Positions 1–18 (MNFKYIIAVSFFIASAYA) are cleaved as a signal peptide. The propeptide occupies 19–43 (RTEEKDVQSLSQRDVLEEESLREIR). Asn-70 carries the post-translational modification Asparagine amide. The propeptide occupies 74–123 (TAEDHEVMKRLEAVMRDLDSLDHPEEASERQTRGFNQEEIANLFTKKEKR). Residue Ile-143 is modified to Isoleucine amide.

This sequence belongs to the bombinin family. In terms of tissue distribution, expressed by the skin glands.

The protein localises to the secreted. In terms of biological role, maximin-4 shows antibacterial activity against both Gram-positive and Gram-negative bacteria. It also shows antimicrobial activity against the fungus C.albicans, but not against A.flavus nor P.uticale. It has little hemolytic activity. It does not possess a significant cytotoxicity against tumor cell lines. It does not possess a significant anti-HIV activity. Functionally, maximin-H3 shows antibacterial activity against both Gram-positive and Gram-negative bacteria. It also shows antimicrobial activity against the fungus C.albicans. Shows strong hemolytic activity. This chain is Maximins 4/H3 type 3, found in Bombina maxima (Giant fire-bellied toad).